A 258-amino-acid polypeptide reads, in one-letter code: Imidazole glycerol phosphate synthase subunit HisF (258 aa).

Active-site residues include aspartate 11 and aspartate 130.

This sequence belongs to the HisA/HisF family. In terms of assembly, heterodimer of HisH and HisF.

It is found in the cytoplasm. The enzyme catalyses 5-[(5-phospho-1-deoxy-D-ribulos-1-ylimino)methylamino]-1-(5-phospho-beta-D-ribosyl)imidazole-4-carboxamide + L-glutamine = D-erythro-1-(imidazol-4-yl)glycerol 3-phosphate + 5-amino-1-(5-phospho-beta-D-ribosyl)imidazole-4-carboxamide + L-glutamate + H(+). It participates in amino-acid biosynthesis; L-histidine biosynthesis; L-histidine from 5-phospho-alpha-D-ribose 1-diphosphate: step 5/9. Its function is as follows. IGPS catalyzes the conversion of PRFAR and glutamine to IGP, AICAR and glutamate. The HisF subunit catalyzes the cyclization activity that produces IGP and AICAR from PRFAR using the ammonia provided by the HisH subunit. The polypeptide is Imidazole glycerol phosphate synthase subunit HisF (Synechococcus sp. (strain CC9902)).